We begin with the raw amino-acid sequence, 235 residues long: Ribonuclease 3 (235 aa).

The RNase III domain occupies 11–137; that stretch reads RAWCAEALGY…VVGALYLDGG (127 aa). E51 provides a ligand contact to Mg(2+). The active site involves D55. Mg(2+) is bound by residues D123 and E126. Residue E126 is part of the active site. In terms of domain architecture, DRBM spans 164 to 233; sequence DYKTQLQEQL…ARQALMPEHH (70 aa).

The protein belongs to the ribonuclease III family. Homodimer. Mg(2+) is required as a cofactor.

Its subcellular location is the cytoplasm. It carries out the reaction Endonucleolytic cleavage to 5'-phosphomonoester.. Its function is as follows. Digests double-stranded RNA. Involved in the processing of primary rRNA transcript to yield the immediate precursors to the large and small rRNAs (23S and 16S). Processes some mRNAs, and tRNAs when they are encoded in the rRNA operon. Processes pre-crRNA and tracrRNA of type II CRISPR loci if present in the organism. The polypeptide is Ribonuclease 3 (Symbiobacterium thermophilum (strain DSM 24528 / JCM 14929 / IAM 14863 / T)).